The following is a 148-amino-acid chain: uncharacterized protein (148 aa).

Residues 1–144 (MNIKRITTEA…PHVLMTKEIS (144 aa)) enclose the N-acetyltransferase domain.

This is an uncharacterized protein from Bacillus subtilis (strain 168).